The sequence spans 866 residues: DNA topoisomerase 3-beta (866 aa).

The Toprim domain maps to 4–149; it reads TVLMVAEKPS…RIFRAKFSSV (146 aa). Positions 10, 114, and 116 each coordinate Mg(2+). A Topo IA-type catalytic domain is found at 165-585; the sequence is SKDEALAVDA…HVLQQFMKKY (421 aa). Positions 207–212 are interaction with DNA; the sequence is SYGPCQ. Y329 serves as the catalytic O-(5'-phospho-DNA)-tyrosine intermediate. Residues 830–853 are compositionally biased toward basic residues; that stretch reads MRRGRGRGRGRGRGRGSSRGRRGS. Residues 830-866 form a disordered region; the sequence is MRRGRGRGRGRGRGRGSSRGRRGSSRHDDPKMSFRDF. Basic and acidic residues predominate over residues 854–866; the sequence is SRHDDPKMSFRDF.

This sequence belongs to the type IA topoisomerase family. Requires Mg(2+) as cofactor.

It catalyses the reaction ATP-independent breakage of single-stranded DNA, followed by passage and rejoining.. In terms of biological role, releases the supercoiling and torsional tension of DNA introduced during the DNA replication and transcription by transiently cleaving and rejoining one strand of the DNA duplex. Introduces a single-strand break via transesterification at a target site in duplex DNA. The scissile phosphodiester is attacked by the catalytic tyrosine of the enzyme, resulting in the formation of a DNA-(5'-phosphotyrosyl)-enzyme intermediate and the expulsion of a 3'-OH DNA strand. The free DNA strand than undergoes passage around the unbroken strand thus removing DNA supercoils. Finally, in the religation step, the DNA 3'-OH attacks the covalent intermediate to expel the active-site tyrosine and restore the DNA phosphodiester backbone. The chain is DNA topoisomerase 3-beta (TOP3B) from Oryza sativa subsp. japonica (Rice).